The chain runs to 198 residues: ADP-ribosylation factor-like protein 3 (198 aa).

N-acetylmethionine is present on methionine 1. Residue 24 to 31 (GLDNAGKT) coordinates GTP. Residue lysine 50 forms a Glycyl lysine isopeptide (Lys-Gly) (interchain with G-Cter in ubiquitin) linkage. Residues 74–78 (DVGGQ) and 133–136 (NKQD) each bind GTP.

This sequence belongs to the small GTPase superfamily. Arf family. As to quaternary structure, interacts with SYS1 and SLO1.

It is found in the golgi apparatus. Involved in the targeting of ARL1 to the Golgi. Can bind and hydrolyze GTP. The polypeptide is ADP-ribosylation factor-like protein 3 (ARL3) (Saccharomyces cerevisiae (strain ATCC 204508 / S288c) (Baker's yeast)).